An 89-amino-acid chain; its full sequence is Small ribosomal subunit protein uS17 (89 aa).

It belongs to the universal ribosomal protein uS17 family. Part of the 30S ribosomal subunit.

One of the primary rRNA binding proteins, it binds specifically to the 5'-end of 16S ribosomal RNA. This is Small ribosomal subunit protein uS17 from Nocardia farcinica (strain IFM 10152).